The primary structure comprises 617 residues: RNA polymerase sigma factor RpoD (617 aa).

Residues 192-222 are disordered; that stretch reads NITNDSNENEDENEDENEDEDENSIDPELAN. Residues 198-216 show a composition bias toward acidic residues; that stretch reads NENEDENEDENEDEDENSI. Residues 383 to 453 are sigma-70 factor domain-2; it reads MVEANLRLVI…TRSIADQART (71 aa). Positions 407–410 match the Interaction with polymerase core subunit RpoC motif; the sequence is DLIQ. Residues 462-538 form a sigma-70 factor domain-3 region; it reads ETINKLNRIS…DTTLELPLDS (77 aa). The interval 551–604 is sigma-70 factor domain-4; the sequence is VLSGLTAREAKVLRMRFGIDMNTDHTLEEVGKQFDVTRERIRQIEAKALRKLRH. A DNA-binding region (H-T-H motif) is located at residues 577–596; it reads LEEVGKQFDVTRERIRQIEA.

It belongs to the sigma-70 factor family. RpoD/SigA subfamily. In terms of assembly, interacts transiently with the RNA polymerase catalytic core.

It is found in the cytoplasm. Functionally, sigma factors are initiation factors that promote the attachment of RNA polymerase to specific initiation sites and are then released. This sigma factor is the primary sigma factor during exponential growth. The chain is RNA polymerase sigma factor RpoD from Buchnera aphidicola subsp. Schizaphis graminum (strain Sg).